The following is a 43-amino-acid chain: Protein PsbN (43 aa).

A helical membrane pass occupies residues 4-24 (GILIVIFISCLLVSFTGYAVY).

The protein belongs to the PsbN family.

Its subcellular location is the plastid. The protein resides in the chloroplast thylakoid membrane. Functionally, may play a role in photosystem I and II biogenesis. This Coleochaete orbicularis (Charophycean green alga) protein is Protein PsbN.